The primary structure comprises 260 residues: Thiazole synthase (260 aa).

The active-site Schiff-base intermediate with DXP is the lysine 96. Residues glycine 157, alanine 184–glycine 185, and asparagine 206–threonine 207 each bind 1-deoxy-D-xylulose 5-phosphate.

It belongs to the ThiG family. Homotetramer. Forms heterodimers with either ThiH or ThiS.

Its subcellular location is the cytoplasm. It carries out the reaction [ThiS sulfur-carrier protein]-C-terminal-Gly-aminoethanethioate + 2-iminoacetate + 1-deoxy-D-xylulose 5-phosphate = [ThiS sulfur-carrier protein]-C-terminal Gly-Gly + 2-[(2R,5Z)-2-carboxy-4-methylthiazol-5(2H)-ylidene]ethyl phosphate + 2 H2O + H(+). Its pathway is cofactor biosynthesis; thiamine diphosphate biosynthesis. Its function is as follows. Catalyzes the rearrangement of 1-deoxy-D-xylulose 5-phosphate (DXP) to produce the thiazole phosphate moiety of thiamine. Sulfur is provided by the thiocarboxylate moiety of the carrier protein ThiS. In vitro, sulfur can be provided by H(2)S. The protein is Thiazole synthase of Nitrobacter winogradskyi (strain ATCC 25391 / DSM 10237 / CIP 104748 / NCIMB 11846 / Nb-255).